We begin with the raw amino-acid sequence, 401 residues long: Carboxybiotin decarboxylase (401 aa).

10 consecutive transmembrane segments (helical) span residues 20–40 (VISI…YFGF), 46–66 (PLIM…VLFL), 70–90 (VVGT…VNLM), 107–127 (LIAC…FILI), 131–151 (ASII…IIGI), 173–193 (MVLF…AIIA), 244–264 (LCLL…GIAI), 275–295 (LLET…LGAL), 306–326 (ISLI…GGVL), and 380–400 (VCGL…LFLL).

Its subcellular location is the cell membrane. The enzyme catalyses N(6)-carboxybiotinyl-L-lysyl-[protein] + n Na(+)(in) + H(+) = N(6)-biotinyl-L-lysyl-[protein] + n Na(+)(out) + CO2. Its function is as follows. Beta subunit of the biotin-dependent malonate decarboxylase multienzyme complex (EC 7.2.4.4). Acts as an integral membrane-bound carboxybiotin protein decarboxylase by releasing the carboxyl group of the carboxylated biotin carrier MADF. The free energy of the decarboxylation reaction is used to pump Na(+) out of the cell. The protein is Carboxybiotin decarboxylase (madB) of Malonomonas rubra.